Reading from the N-terminus, the 505-residue chain is Proton-coupled zinc antiporter SLC30A1 (505 aa).

Over 1-10 the chain is Cytoplasmic; it reads MGCWGRNRGR. A helical transmembrane segment spans residues 11 to 31; sequence LLCMLALTFMFMVLEVVVSRV. The Extracellular segment spans residues 32–35; sequence TSSL. Residues 36-56 traverse the membrane as a helical segment; sequence AMLSDSFHMLSDVLALVVALV. The Zn(2+) site is built by His43 and Asp47. Over 57-80 the chain is Cytoplasmic; the sequence is AERFARRTHATQKNTFGWIRAEVM. The helical transmembrane segment at 81-101 threads the bilayer; it reads GALVNAIFLTGLCFAILLEAI. At 102-113 the chain is on the extracellular side; that stretch reads ERFVEPHEMQQP. A helical transmembrane segment spans residues 114-134; that stretch reads LVVLGVGVAGLLVNVLGLCLF. The Cytoplasmic portion of the chain corresponds to 135-246; sequence HHHSGFSQDS…RAGQLNMRGV (112 aa). The interval 142-215 is disordered; the sequence is QDSGHSHSHG…DPEKPRSGDT (74 aa). A compositionally biased stretch (polar residues) spans 187–199; that stretch reads TNTLVANTSNSNG. The segment covering 203-214 has biased composition (basic and acidic residues); the sequence is DPADPEKPRSGD. Residues 247-267 form a helical membrane-spanning segment; sequence FLHVLGDALGSVIVVVNALVF. Residues His249 and Asp253 each contribute to the Zn(2+) site. The Extracellular portion of the chain corresponds to 268–306; that stretch reads YFSWKGCSEGDFCVNPCFPDPCKAFVEIINSTHASVYEA. The N-linked (GlcNAc...) asparagine glycan is linked to Asn297. A helical membrane pass occupies residues 307-327; sequence GPCWVLYLDPTLCVVMVCILL. The Cytoplasmic segment spans residues 328–505; it reads YTTYPLLKES…MPNKQPESSL (178 aa). At Ser504 the chain carries Phosphoserine.

This sequence belongs to the cation diffusion facilitator (CDF) transporter (TC 2.A.4) family. SLC30A subfamily. In terms of assembly, homodimer. Interacts with TMEM163. Interacts and forms a complex with TMC6 and TMC8; the interaction regulates zinc transport into the ER.

The protein localises to the cell membrane. It is found in the basolateral cell membrane. It localises to the cytoplasmic vesicle membrane. Its subcellular location is the cytoplasm. The protein resides in the endoplasmic reticulum membrane. The protein localises to the golgi apparatus membrane. It is found in the nucleus membrane. It catalyses the reaction Zn(2+)(in) + 2 H(+)(out) = Zn(2+)(out) + 2 H(+)(in). Zinc ion:proton antiporter that could function at the plasma membrane mediating zinc efflux from cells against its electrochemical gradient protecting them from intracellular zinc accumulation and toxicity. Alternatively, could prevent the transport to the plasma membrane of CACNB2, the L-type calcium channels regulatory subunit, through a yet to be defined mechanism. By modulating the expression of these channels at the plasma membrane, could prevent calcium and zinc influx into cells. By the same mechanism, could also prevent L-type calcium channels-mediated heavy metal influx into cells. In some cells, could also function as a zinc ion:proton antiporter mediating zinc entry into the lumen of cytoplasmic vesicles. In macrophages, can increase zinc ions concentration into the lumen of cytoplasmic vesicles containing engulfed bacteria and could help inactivate them. Forms a complex with TMC6/EVER1 and TMC8/EVER2 at the ER membrane of keratynocytes which facilitates zinc uptake into the ER. Down-regulates the activity of transcription factors induced by zinc and cytokines. This Macaca fascicularis (Crab-eating macaque) protein is Proton-coupled zinc antiporter SLC30A1.